The sequence spans 400 residues: Sphingosine 1-phosphate receptor 5 (400 aa).

Topologically, residues 1-41 (MEPGLLRPAPVSEVIVLHYNYTGKLRGARYQPGAGLRADAA) are extracellular. An N-linked (GlcNAc...) asparagine glycan is attached at N20. The chain crosses the membrane as a helical span at residues 42-62 (VCLAVCAFIVLENLAVLLVLV). Topologically, residues 63–68 (RHPRFH) are cytoplasmic. The helical transmembrane segment at 69–89 (APMFLLLGSLTLSDLLAGAAY) threads the bilayer. Over 90–111 (ATNILLSGPLTLRLSPALWFAR) the chain is Extracellular. The chain crosses the membrane as a helical span at residues 112-132 (EGGVFVALAASVLSLLAIALE). At 133 to 151 (RHLTMARRGPAPAASRART) the chain is on the cytoplasmic side. A helical transmembrane segment spans residues 152 to 172 (LAMAVAAWGASLLLGLLPALG). Over 173–192 (WNCLGRLETCSTVLPLYAKA) the chain is Extracellular. The chain crosses the membrane as a helical span at residues 193 to 213 (YVLFCVLAFLGILAAICALYA). Topologically, residues 214 to 253 (RIYCQVRANARRLRAGPGSRRATSSSRSRHTPRSLALLRT) are cytoplasmic. A helical membrane pass occupies residues 254–274 (LSVVLLAFVACWGPLFLLLLL). Residues 275 to 288 (DVACPARACPVLLQ) lie on the Extracellular side of the membrane. The helical transmembrane segment at 289–309 (ADPFLGLAMANSLLNPIIYTF) threads the bilayer. Topologically, residues 310–400 (TNRDLRHALL…NRSLVPTATD (91 aa)) are cytoplasmic. The S-palmitoyl cysteine moiety is linked to residue C324. The segment at 331-400 (QDSSNSLQRS…NRSLVPTATD (70 aa)) is disordered. A phosphoserine mark is found at S340, S342, and S384. Residues 360 to 400 (DRSSSPSEHLSPQQDGVDTSCSTGSPGVATANRSLVPTATD) show a composition bias toward polar residues.

It belongs to the G-protein coupled receptor 1 family. As to expression, expressed in spleen and brain. In the CNS expression is restricted to oligodendrocytes.

The protein resides in the cell membrane. Receptor for the lysosphingolipid sphingosine 1-phosphate (S1P). S1P is a bioactive lysophospholipid that elicits diverse physiological effect on most types of cells and tissues. Is coupled to both the G(i/0)alpha and G(12) subclass of heteromeric G-proteins. S1P activation on oligodendroglial cells modulates two distinct functional pathways mediating either process retraction or cell survival. S1P activation on O4-positive pre-oligodendrocytes induces process retraction via a Rho kinase/collapsin response-mediated protein signaling pathway. The S1P-induced survival of mature oligodendrocytes is mediated through a pertussis toxin-sensitive, Akt-dependent pathway. S1P activation on oligodendroglial cells modulates two distinct functional pathways mediating either process retraction or cell survival. These effects depend on the developmental stage of the cell. The sequence is that of Sphingosine 1-phosphate receptor 5 (S1pr5) from Mus musculus (Mouse).